The chain runs to 269 residues: Aquaporin-1 (269 aa).

At 1-11 (MASEFKKKLFW) the chain is on the cytoplasmic side. The chain crosses the membrane as a helical span at residues 12 to 29 (RAVVAEFLAMTLFVFISI). Topologically, residues 30–46 (GSALGFKYPVGNNQTAV) are extracellular. A glycan (N-linked (GlcNAc...) asparagine) is linked at Asn42. Residues 47–65 (QDNVKVSLAFGLSIATLAQ) traverse the membrane as a helical segment. The Cytoplasmic portion of the chain corresponds to 66-68 (SVG). An intramembrane segment occupies 69-82 (HISGAHLNPAVTLG). The NPA 1 motif lies at 76–78 (NPA). Over 83–90 (LLLSCQIS) the chain is Cytoplasmic. A helical membrane pass occupies residues 91–109 (IFRALMYIIAQCVGAIVAT). At 110-133 (AILSGITSSLPGNSLGRNDLADGV) the chain is on the extracellular side. Residues 134–153 (NSGQGLGIEIIGTLQLVLCV) traverse the membrane as a helical segment. Over 154-163 (LATTDRRRRD) the chain is Cytoplasmic. Residues 164-181 (LGGSAPLAIGLSVALGHL) traverse the membrane as a helical segment. Topologically, residues 182–186 (LAIDY) are extracellular. The stretch at 187 to 199 (TGCGINPARSFGS) is an intramembrane region. The short motif at 192-194 (NPA) is the NPA 2 element. At 200–206 (AVITHNF) the chain is on the extracellular side. N-linked (GlcNAc...) asparagine glycosylation occurs at Asn205. The chain crosses the membrane as a helical span at residues 207 to 224 (SNHWIFWVGPFIGGALAV). Topologically, residues 225-269 (LIYDFILAPRSSDFTDRVKVWTSGQVEEYDLDADDINSRVEMKPK) are cytoplasmic. Ser247 carries the post-translational modification Phosphoserine. The residue at position 253 (Tyr253) is a Phosphotyrosine. Phosphoserine is present on Ser262.

This sequence belongs to the MIP/aquaporin (TC 1.A.8) family. In terms of assembly, homotetramer; each monomer provides an independent water pore. Component of the ankyrin-1 complex in the erythrocyte, composed of ANK1, RHCE, RHAG, SLC4A1, EPB42, GYPA, GYPB and AQP1. Interacts with EPHB2; involved in endolymph production in the inner ear. Identified in a complex with STOM. Interacts (via the N-terminal) with ANK1 (via ANK 1-5 repeats). Interacts (via the C-terminal) with EPB42.

The protein resides in the cell membrane. It carries out the reaction H2O(in) = H2O(out). The catalysed reaction is nitric oxide(out) = nitric oxide(in). The enzyme catalyses CO2(out) = CO2(in). It catalyses the reaction glycerol(in) = glycerol(out). It carries out the reaction H2O2(out) = H2O2(in). The catalysed reaction is K(+)(in) = K(+)(out). The enzyme catalyses Na(+)(in) = Na(+)(out). Functionally, forms a water channel that facilitates the transport of water across cell membranes, playing a crucial role in water homeostasis in various tissues. Could also be permeable to small solutes including hydrogen peroxide, glycerol and gases such as amonnia (NH3), nitric oxide (NO) and carbon dioxide (CO2). Recruited to the ankyrin-1 complex, a multiprotein complex of the erythrocyte membrane, it could be part of a CO2 metabolon, linking facilitated diffusion of CO2 across the membrane, anion exchange of Cl(-)/HCO3(-) and interconversion of dissolved CO2 and carbonic acid in the cytosol. In vitro, it shows non-selective gated cation channel activity and may be permeable to cations like K(+) and Na(+) in vivo. This is Aquaporin-1 from Pongo abelii (Sumatran orangutan).